We begin with the raw amino-acid sequence, 45 residues long: Large ribosomal subunit protein bL34 (45 aa).

It belongs to the bacterial ribosomal protein bL34 family.

The chain is Large ribosomal subunit protein bL34 from Clavibacter michiganensis subsp. michiganensis (strain NCPPB 382).